Reading from the N-terminus, the 151-residue chain is MGTDDVARSEKIREGFQINWLILRDADTGKIIWQENKDFSCPDVEHEARVPIKILDLRAVSREINFSTVESMENFRLDQKVLFKGRIMEEWFFEMGWVSPNTTNTWQSTIEAAPESQMMPAKVLNGNVTIETSFFDGETLISKSVVRLYYT.

Belongs to the PDE6D/unc-119 family. In terms of assembly, interacts with Pde6.

It localises to the nucleus. The protein localises to the cytoplasm. The polypeptide is Probable cGMP 3',5'-cyclic phosphodiesterase subunit delta (Aedes aegypti (Yellowfever mosquito)).